The chain runs to 357 residues: DNA replication and repair protein RecF (357 aa).

Gly-30–Thr-37 lines the ATP pocket.

The protein belongs to the RecF family.

The protein resides in the cytoplasm. The RecF protein is involved in DNA metabolism; it is required for DNA replication and normal SOS inducibility. RecF binds preferentially to single-stranded, linear DNA. It also seems to bind ATP. The protein is DNA replication and repair protein RecF of Shigella dysenteriae serotype 1 (strain Sd197).